A 687-amino-acid polypeptide reads, in one-letter code: Transketolase 2 (687 aa).

His47 contacts substrate. Thiamine diphosphate is bound by residues His87 and 135–137 (GPL). Position 176 (Asp176) interacts with Mg(2+). 2 residues coordinate thiamine diphosphate: Gly177 and Asn206. Mg(2+) is bound by residues Asn206 and Ile208. The substrate site is built by His282, Arg379, and Ser406. Thiamine diphosphate is bound at residue His282. Glu432 acts as the Proton donor in catalysis. Phe458 serves as a coordination point for thiamine diphosphate. Residues His482, Asp490, His494, and Arg541 each contribute to the substrate site.

This sequence belongs to the transketolase family. It depends on Mg(2+) as a cofactor. Thiamine diphosphate is required as a cofactor.

The catalysed reaction is D-sedoheptulose 7-phosphate + D-glyceraldehyde 3-phosphate = aldehydo-D-ribose 5-phosphate + D-xylulose 5-phosphate. With respect to regulation, activity is increased sixfold following autotrophic growth on methanol compared with that of heterotrophically grown cells. In terms of biological role, catalyzes the transfer of a two-carbon ketol group from a ketose donor to an aldose acceptor, via a covalent intermediate with the cofactor thiamine pyrophosphate. In Xanthobacter flavus, this protein is Transketolase 2.